Consider the following 372-residue polypeptide: GRASP65 homolog protein 1 (372 aa).

M1 is subject to N-acetylmethionine. PDZ GRASP-type domains lie at 66-183 and 188-276; these read SGLR…WTPL and FTYH…YGFL. The segment at 66-292 is GRASP; that stretch reads SGLRIVWVDE…KHCPQQAQQQ (227 aa). At S155 the chain carries Phosphoserine. A disordered region spans residues 312 to 372; it reads VPSAFTAPPV…PPPQKQSSSD (61 aa).

Homodimer. Interacts with BUG1 (via C-terminus), probably forming a heterooligomer consisting of a GRH1 dimer and a BUG1 dimer. Interacts with COPII coat components SEC23, SEC24, SFB2 and SFB3. N-terminal acetylation; by N-terminal acetyltransferase NatC.

The protein resides in the cytoplasm. Its subcellular location is the golgi apparatus. It is found in the cis-Golgi network membrane. Functionally, involved in the spindle assembly checkpoint. Involved in ER to Golgi vesicle-mediated transport by either facilitating USO1-dependent and -independent tethering or increasing target accuracy of fusion events of COPII-coated vesicles. The protein is GRASP65 homolog protein 1 (GRH1) of Saccharomyces cerevisiae (strain ATCC 204508 / S288c) (Baker's yeast).